The sequence spans 297 residues: Bifunctional protein FolD (297 aa).

Residues 164-166, S193, and I234 contribute to the NADP(+) site; that span reads GRS.

It belongs to the tetrahydrofolate dehydrogenase/cyclohydrolase family. In terms of assembly, homodimer.

It carries out the reaction (6R)-5,10-methylene-5,6,7,8-tetrahydrofolate + NADP(+) = (6R)-5,10-methenyltetrahydrofolate + NADPH. The catalysed reaction is (6R)-5,10-methenyltetrahydrofolate + H2O = (6R)-10-formyltetrahydrofolate + H(+). It participates in one-carbon metabolism; tetrahydrofolate interconversion. In terms of biological role, catalyzes the oxidation of 5,10-methylenetetrahydrofolate to 5,10-methenyltetrahydrofolate and then the hydrolysis of 5,10-methenyltetrahydrofolate to 10-formyltetrahydrofolate. The chain is Bifunctional protein FolD from Halobacterium salinarum (strain ATCC 700922 / JCM 11081 / NRC-1) (Halobacterium halobium).